The chain runs to 511 residues: Histidine ammonia-lyase (511 aa).

The segment at residues 142–144 (ASG) is a cross-link (5-imidazolinone (Ala-Gly)). The residue at position 143 (Ser143) is a 2,3-didehydroalanine (Ser).

Belongs to the PAL/histidase family. Post-translationally, contains an active site 4-methylidene-imidazol-5-one (MIO), which is formed autocatalytically by cyclization and dehydration of residues Ala-Ser-Gly.

The protein resides in the cytoplasm. It carries out the reaction L-histidine = trans-urocanate + NH4(+). The protein operates within amino-acid degradation; L-histidine degradation into L-glutamate; N-formimidoyl-L-glutamate from L-histidine: step 1/3. This Brucella ovis (strain ATCC 25840 / 63/290 / NCTC 10512) protein is Histidine ammonia-lyase.